The following is a 475-amino-acid chain: UDP-glycosyltransferase 84A4 (475 aa).

The Proton acceptor role is filled by His20. Position 20 (His20) interacts with an anthocyanidin. UDP-alpha-D-glucose contacts are provided by Gln342, His357, Trp360, Asn361, Ser362, and Glu365. Gly380 provides a ligand contact to an anthocyanidin. Residues Asp381 and Gln382 each contribute to the UDP-alpha-D-glucose site.

The protein belongs to the UDP-glycosyltransferase family.

It catalyses the reaction (E)-4-coumarate + UDP-alpha-D-glucose = 4-O-(beta-D-glucosyl)-trans-4-coumarate + UDP + H(+). The enzyme catalyses (E)-ferulate + UDP-alpha-D-glucose = 1-O-[(E)-feruloyl]-beta-D-glucose + UDP. The catalysed reaction is (E)-caffeate + UDP-alpha-D-glucose = 1-O-[(E)-caffeoyl]-beta-D-glucose + UDP. It carries out the reaction (E)-sinapate + UDP-alpha-D-glucose = 1-O-(trans-sinapoyl)-beta-D-glucose + UDP. It catalyses the reaction (E)-cinnamate + UDP-alpha-D-glucose = 1-O-(trans-cinnamoyl)-beta-D-glucose + UDP. Functionally, UDP-glucosyltransferase that forms glucose esters with phenylpropanoids. Glucosylates 4-coumarate, ferulate, caffeate, sinapate and cinnamate. In Arabidopsis thaliana (Mouse-ear cress), this protein is UDP-glycosyltransferase 84A4.